The following is a 49-amino-acid chain: Large ribosomal subunit protein bL33 (49 aa).

The protein belongs to the bacterial ribosomal protein bL33 family.

This is Large ribosomal subunit protein bL33 from Thermosipho melanesiensis (strain DSM 12029 / CIP 104789 / BI429).